The following is a 1343-amino-acid chain: DNA-directed RNA polymerase subunit beta (1343 aa).

This sequence belongs to the RNA polymerase beta chain family. In terms of assembly, the RNAP catalytic core consists of 2 alpha, 1 beta, 1 beta' and 1 omega subunit. When a sigma factor is associated with the core the holoenzyme is formed, which can initiate transcription.

The enzyme catalyses RNA(n) + a ribonucleoside 5'-triphosphate = RNA(n+1) + diphosphate. Its function is as follows. DNA-dependent RNA polymerase catalyzes the transcription of DNA into RNA using the four ribonucleoside triphosphates as substrates. The chain is DNA-directed RNA polymerase subunit beta from Haemophilus influenzae (strain ATCC 51907 / DSM 11121 / KW20 / Rd).